Here is a 315-residue protein sequence, read N- to C-terminus: Methionyl-tRNA formyltransferase (315 aa).

A (6S)-5,6,7,8-tetrahydrofolate-binding site is contributed by 113–116; that stretch reads SLLP.

The protein belongs to the Fmt family.

It carries out the reaction L-methionyl-tRNA(fMet) + (6R)-10-formyltetrahydrofolate = N-formyl-L-methionyl-tRNA(fMet) + (6S)-5,6,7,8-tetrahydrofolate + H(+). Functionally, attaches a formyl group to the free amino group of methionyl-tRNA(fMet). The formyl group appears to play a dual role in the initiator identity of N-formylmethionyl-tRNA by promoting its recognition by IF2 and preventing the misappropriation of this tRNA by the elongation apparatus. This is Methionyl-tRNA formyltransferase from Erwinia tasmaniensis (strain DSM 17950 / CFBP 7177 / CIP 109463 / NCPPB 4357 / Et1/99).